The primary structure comprises 177 residues: Large ribosomal subunit protein uL6 (177 aa).

The protein belongs to the universal ribosomal protein uL6 family. As to quaternary structure, part of the 50S ribosomal subunit.

Functionally, this protein binds to the 23S rRNA, and is important in its secondary structure. It is located near the subunit interface in the base of the L7/L12 stalk, and near the tRNA binding site of the peptidyltransferase center. This chain is Large ribosomal subunit protein uL6, found in Rhodopseudomonas palustris (strain BisB18).